We begin with the raw amino-acid sequence, 140 residues long: Large ribosomal subunit protein uL11 (140 aa).

This sequence belongs to the universal ribosomal protein uL11 family. Part of the ribosomal stalk of the 50S ribosomal subunit. Interacts with L10 and the large rRNA to form the base of the stalk. L10 forms an elongated spine to which L12 dimers bind in a sequential fashion forming a multimeric L10(L12)X complex. One or more lysine residues are methylated.

Functionally, forms part of the ribosomal stalk which helps the ribosome interact with GTP-bound translation factors. This is Large ribosomal subunit protein uL11 from Geotalea daltonii (strain DSM 22248 / JCM 15807 / FRC-32) (Geobacter daltonii).